The following is a 294-amino-acid chain: Tetraspanin-15 (294 aa).

The Cytoplasmic segment spans residues 1–23; it reads MPRGDSEQVRYCARFSYLWLKFS. A helical membrane pass occupies residues 24 to 44; sequence LIIYSTVFWLIGALVLSVGIY. Over 45–62 the chain is Extracellular; it reads AEVERQKYKTLESAFLAP. Residues 63 to 83 traverse the membrane as a helical segment; that stretch reads AIILILLGVVMFMVSFIGVLA. Topologically, residues 84–93 are cytoplasmic; the sequence is SLRDNLYLLQ. The chain crosses the membrane as a helical span at residues 94–114; it reads AFMYILGICLIMELIGGVVAL. Topologically, residues 115–235 are extracellular; it reads TFRNQTIDFL…WFMDNYTIMA (121 aa). Residue Asn-118 is glycosylated (N-linked (GlcNAc...) asparagine). 4 disulfides stabilise this stretch: Cys-154–Cys-219, Cys-155–Cys-185, Cys-171–Cys-179, and Cys-186–Cys-198. Asn-189 and Asn-230 each carry an N-linked (GlcNAc...) asparagine glycan. The chain crosses the membrane as a helical span at residues 236–256; that stretch reads GILLGILLPQFLGVLLTLLYI. Topologically, residues 257–294 are cytoplasmic; it reads TRVEDIIMEHSVTDGLLGPGAKPSVEAAGTGCCLCYPN.

Belongs to the tetraspanin (TM4SF) family. In terms of assembly, interacts with ADAM10; the interaction influences ADAM10 substrate specificity, endocytosis and turnover. In terms of processing, palmitoylated.

The protein resides in the cell membrane. The protein localises to the late endosome membrane. Part of TspanC8 subgroup, composed of 6 members that interact with the transmembrane metalloprotease ADAM10. This interaction is required for ADAM10 exit from the endoplasmic reticulum and for enzymatic maturation and trafficking to the cell surface as well as substrate specificity. Different TspanC8/ADAM10 complexes have distinct substrates. Promotes ADAM10-mediated cleavage of CDH2. Negatively regulates ligand-induced Notch activity probably by regulating ADAM10 activity. The chain is Tetraspanin-15 from Homo sapiens (Human).